The primary structure comprises 226 residues: Cytidylate kinase (226 aa).

11–19 (GPASAGKST) provides a ligand contact to ATP.

Belongs to the cytidylate kinase family. Type 1 subfamily.

It is found in the cytoplasm. The enzyme catalyses CMP + ATP = CDP + ADP. It catalyses the reaction dCMP + ATP = dCDP + ADP. This chain is Cytidylate kinase, found in Pediococcus pentosaceus (strain ATCC 25745 / CCUG 21536 / LMG 10740 / 183-1w).